The following is a 312-amino-acid chain: Aspartate carbamoyltransferase catalytic subunit (312 aa).

Carbamoyl phosphate is bound by residues arginine 57 and threonine 58. Lysine 85 provides a ligand contact to L-aspartate. Residues arginine 107, histidine 135, and glutamine 138 each coordinate carbamoyl phosphate. L-aspartate-binding residues include arginine 168 and arginine 222. Residues glycine 264 and proline 265 each contribute to the carbamoyl phosphate site.

This sequence belongs to the aspartate/ornithine carbamoyltransferase superfamily. ATCase family. In terms of assembly, heterododecamer (2C3:3R2) of six catalytic PyrB chains organized as two trimers (C3), and six regulatory PyrI chains organized as three dimers (R2).

It catalyses the reaction carbamoyl phosphate + L-aspartate = N-carbamoyl-L-aspartate + phosphate + H(+). Its pathway is pyrimidine metabolism; UMP biosynthesis via de novo pathway; (S)-dihydroorotate from bicarbonate: step 2/3. Catalyzes the condensation of carbamoyl phosphate and aspartate to form carbamoyl aspartate and inorganic phosphate, the committed step in the de novo pyrimidine nucleotide biosynthesis pathway. The sequence is that of Aspartate carbamoyltransferase catalytic subunit from Carboxydothermus hydrogenoformans (strain ATCC BAA-161 / DSM 6008 / Z-2901).